Reading from the N-terminus, the 335-residue chain is MRN complex-interacting protein (335 aa).

2 disordered regions span residues 75–102 (EEAV…PSKP) and 118–194 (QELD…ALST). Serine 100 is subject to Phosphoserine. The segment covering 129-142 (TQLSTSAERPSSPA) has biased composition (polar residues). The short motif at 145 to 148 (RKRK) is the Nuclear localization signal (NLS) element. The span at 177–194 (STGLFGTEQQGTSPALST) shows a compositional bias: polar residues. A necessary for the association with the MRN complex region spans residues 203–230 (FPRWKLPSPVTQVNAPSSKWARFLLAPG). A disordered region spans residues 273–335 (RPPQAIHTTT…TTGEDFDDDL (63 aa)). Residues 286–297 (DRPDRKTREQPR) show a composition bias toward basic and acidic residues.

The protein belongs to the MRNIP family. Associates with the MRE11-RAD50-NBN (MRN) damage-sensing complex; this association is constitutive. Interacts with MRE11. Interacts with NBN. Interacts with RAD50. In terms of processing, phosphorylated; phosphorylation is constitutive and occurs in the absence of any DNA-damaging stimulus. Phosphorylation is necessary for its nuclear retention.

It is found in the nucleus. It localises to the nucleoplasm. Functionally, plays a role in the cellular response to DNA damage and the maintenance of genome stability through its association with the MRN damage-sensing complex. Promotes chromatin loading and activity of the MRN complex to facilitate subsequent ATM-mediated DNA damage response signaling and DNA repair. In Mus musculus (Mouse), this protein is MRN complex-interacting protein.